A 423-amino-acid chain; its full sequence is Core protease OPG083 (423 aa).

Active-site residues include H241, D248, and C328.

Belongs to the peptidase C57 family.

The protein localises to the virion. In terms of biological role, late protein responsible for processing most or all of the viral core and membrane proteins known to undergo morphogenesis-associated proteolysis. These proteolytic events are involved in the transformation of immature virions (IV) into mature virions (MV). Probably cleaves at least the OPG129/A3, OPG136/A10, OPG098/L4, and OPG144/A17 precursors preferentially at Ala-Gly-|-Ala motifs. Also seems to process Ala-Gly-|-Ser and Ala-Gly-|-Thr motifs. The polypeptide is Core protease OPG083 (OPG083) (Bos taurus (Bovine)).